Reading from the N-terminus, the 218-residue chain is Putative glutamine transport system permease protein GlnP (218 aa).

The ABC transmembrane type-1 domain maps to 19–208; sequence TLVTLKYSVI…ILVILISFIA (190 aa). 4 helical membrane passes run 25–45, 57–79, 86–108, and 187–207; these read YSVI…ICKV, FYTS…FAAP, FNVF…SEVI, and FFPM…ISFI.

The protein belongs to the binding-protein-dependent transport system permease family. HisMQ subfamily.

Its subcellular location is the cell inner membrane. Its function is as follows. Part of the binding-protein-dependent transport system for glutamine; probably responsible for the translocation of the substrate across the membrane. The polypeptide is Putative glutamine transport system permease protein GlnP (glnP) (Rickettsia prowazekii (strain Madrid E)).